Reading from the N-terminus, the 467-residue chain is ATP synthase subunit beta (467 aa).

154–161 contributes to the ATP binding site; sequence GGAGVGKT.

Belongs to the ATPase alpha/beta chains family. F-type ATPases have 2 components, CF(1) - the catalytic core - and CF(0) - the membrane proton channel. CF(1) has five subunits: alpha(3), beta(3), gamma(1), delta(1), epsilon(1). CF(0) has three main subunits: a(1), b(2) and c(9-12). The alpha and beta chains form an alternating ring which encloses part of the gamma chain. CF(1) is attached to CF(0) by a central stalk formed by the gamma and epsilon chains, while a peripheral stalk is formed by the delta and b chains.

The protein localises to the cell inner membrane. It carries out the reaction ATP + H2O + 4 H(+)(in) = ADP + phosphate + 5 H(+)(out). In terms of biological role, produces ATP from ADP in the presence of a proton gradient across the membrane. The catalytic sites are hosted primarily by the beta subunits. The chain is ATP synthase subunit beta from Petrotoga mobilis (strain DSM 10674 / SJ95).